Reading from the N-terminus, the 118-residue chain is Small ribosomal subunit protein bS6 (118 aa).

This sequence belongs to the bacterial ribosomal protein bS6 family.

Functionally, binds together with bS18 to 16S ribosomal RNA. This is Small ribosomal subunit protein bS6 from Parabacteroides distasonis (strain ATCC 8503 / DSM 20701 / CIP 104284 / JCM 5825 / NCTC 11152).